The chain runs to 286 residues: Bifunctional protein FolD (286 aa).

NADP(+)-binding positions include 166-168 (GAS) and Ile232.

Belongs to the tetrahydrofolate dehydrogenase/cyclohydrolase family. As to quaternary structure, homodimer.

It catalyses the reaction (6R)-5,10-methylene-5,6,7,8-tetrahydrofolate + NADP(+) = (6R)-5,10-methenyltetrahydrofolate + NADPH. The catalysed reaction is (6R)-5,10-methenyltetrahydrofolate + H2O = (6R)-10-formyltetrahydrofolate + H(+). Its pathway is one-carbon metabolism; tetrahydrofolate interconversion. Catalyzes the oxidation of 5,10-methylenetetrahydrofolate to 5,10-methenyltetrahydrofolate and then the hydrolysis of 5,10-methenyltetrahydrofolate to 10-formyltetrahydrofolate. In Blochmanniella pennsylvanica (strain BPEN), this protein is Bifunctional protein FolD.